A 228-amino-acid chain; its full sequence is Potassium/proton antiporter CemA (228 aa).

Helical transmembrane passes span 6-26 (FIPLLYLTSIVFLPWWVSFSF), 113-133 (IICFVILSGYSFLVNEELFIL), and 188-208 (IISGLVSTFPVIFDTIFKYWI).

Belongs to the CemA family.

The protein resides in the plastid. It localises to the chloroplast inner membrane. It carries out the reaction K(+)(in) + H(+)(out) = K(+)(out) + H(+)(in). Its function is as follows. Contributes to K(+)/H(+) antiport activity by supporting proton efflux to control proton extrusion and homeostasis in chloroplasts in a light-dependent manner to modulate photosynthesis. Prevents excessive induction of non-photochemical quenching (NPQ) under continuous-light conditions. Indirectly promotes efficient inorganic carbon uptake into chloroplasts. The protein is Potassium/proton antiporter CemA of Populus alba (White poplar).